We begin with the raw amino-acid sequence, 168 residues long: NADH-quinone oxidoreductase subunit E 2 (168 aa).

Residues Cys77, Cys82, Cys118, and Cys122 each contribute to the [2Fe-2S] cluster site.

It belongs to the complex I 24 kDa subunit family. [2Fe-2S] cluster serves as cofactor.

The enzyme catalyses a quinone + NADH + 5 H(+)(in) = a quinol + NAD(+) + 4 H(+)(out). NDH-1 shuttles electrons from NADH, via FMN and iron-sulfur (Fe-S) centers, to quinones in the respiratory chain. The immediate electron acceptor for the enzyme in this species is believed to be ubiquinone. Couples the redox reaction to proton translocation (for every two electrons transferred, four hydrogen ions are translocated across the cytoplasmic membrane), and thus conserves the redox energy in a proton gradient. This is NADH-quinone oxidoreductase subunit E 2 (nuoE2) from Rhizobium meliloti (strain 1021) (Ensifer meliloti).